Here is a 517-residue protein sequence, read N- to C-terminus: Glutamate--tRNA ligase (517 aa).

A 'HIGH' region motif is present at residues 14-24; the sequence is PSPTGPLHIGG. Residues 266–270 carry the 'KMSKS' region motif; the sequence is KLSKR. K269 contributes to the ATP binding site.

This sequence belongs to the class-I aminoacyl-tRNA synthetase family. Glutamate--tRNA ligase type 1 subfamily. Monomer.

It localises to the cytoplasm. The enzyme catalyses tRNA(Glu) + L-glutamate + ATP = L-glutamyl-tRNA(Glu) + AMP + diphosphate. Its function is as follows. Catalyzes the attachment of glutamate to tRNA(Glu) in a two-step reaction: glutamate is first activated by ATP to form Glu-AMP and then transferred to the acceptor end of tRNA(Glu). The chain is Glutamate--tRNA ligase from Cytophaga hutchinsonii (strain ATCC 33406 / DSM 1761 / CIP 103989 / NBRC 15051 / NCIMB 9469 / D465).